Consider the following 129-residue polypeptide: M-zodatoxin-Lt8f (129 aa).

The first 20 residues, 1–20, serve as a signal peptide directing secretion; the sequence is MKYFVVALALVAAFACIAES. Positions 21–60 are excised as a propeptide; it reads KPAESEHELAEVEEENELADLEDAVWLEHLADLSDLEEAR. Residues 57–60 carry the Processing quadruplet motif motif; the sequence is EEAR.

Post-translationally, cleavage of the propeptide depends on the processing quadruplet motif (XXXR, with at least one of X being E). As to expression, expressed by the venom gland.

The protein resides in the secreted. Functionally, insecticidal, cytolytic and antimicrobial peptide. Has insecticidal activity against the flesh fly S.carnaria. Has antibacterial activity against the Gram-negative bacteria E.coli. Forms voltage-dependent, ion-permeable channels in membranes. At high concentration causes cell membrane lysis. The polypeptide is M-zodatoxin-Lt8f (cit 1-7) (Lachesana tarabaevi (Spider)).